A 46-amino-acid chain; its full sequence is ALPCRCEGKTEYGDKWIFHGGCPNDYGYNDRCFMKPGSVCCYPKYE.

Disulfide bonds link cysteine 4–cysteine 40, cysteine 6–cysteine 32, and cysteine 22–cysteine 41.

Belongs to the sea anemone type 3 (BDS) potassium channel toxin family.

It localises to the secreted. Its subcellular location is the nematocyst. Neurotoxin that induces paralysis (but not death) to U.thayeri crabs. Partially and reversibly inhibits glutamate-evoked peak currents (IC(50)=4.7 uM) but not voltage-gated potassium channel currents in cultured isolated neurons from the land snail H.aspersa. Weakly inhibits voltage-gated potassium peak currents (IC(50)=6.4 uM) and steady-state currents (IC(50)=8.2 uM) in rat dorsal root ganglion (DRG) neurons. Weakly inhibits voltage-gated sodium currents in rat DRG neurons (IC(50)=0.9 uM). The protein is Toxin PhcrTx2 of Phymanthus crucifer (Red beaded anemone).